Here is a 193-residue protein sequence, read N- to C-terminus: Coiled-coil domain-containing protein 184 (193 aa).

Residues 39–68 (GMKELMEHLKAQLQALFEDVRAMRGALDEQ) are a coiled coil. Residues 101-176 (GLGVAGGKGS…LGENGPLVEP (76 aa)) are disordered. Residues 135-146 (PDEEDEEEEEEK) show a composition bias toward acidic residues.

The sequence is that of Coiled-coil domain-containing protein 184 (Ccdc184) from Rattus norvegicus (Rat).